Reading from the N-terminus, the 216-residue chain is MSDDPETAERKMRFLFALRQRGVTDPRVLEAMERIDRGEFVRGHFEDRAYDDTPLPIPCGQTISQPSVVGLMTQALEVGPRDKVLEIGTGSGYQAAVLSLLCRRVYTIDRHRRLVAEAEALFRHLGLPNITALVGDGSRGLPEQAPFDRIMVTAAAEDPPGPLLAQLKIGGIMVVPVGQSDAVQTLIRVRRGENGFDYDELRQVRFVPLVEGLGQT.

S64 is an active-site residue.

This sequence belongs to the methyltransferase superfamily. L-isoaspartyl/D-aspartyl protein methyltransferase family.

The protein localises to the cytoplasm. It carries out the reaction [protein]-L-isoaspartate + S-adenosyl-L-methionine = [protein]-L-isoaspartate alpha-methyl ester + S-adenosyl-L-homocysteine. Catalyzes the methyl esterification of L-isoaspartyl residues in peptides and proteins that result from spontaneous decomposition of normal L-aspartyl and L-asparaginyl residues. It plays a role in the repair and/or degradation of damaged proteins. This is Protein-L-isoaspartate O-methyltransferase from Paracoccus denitrificans (strain Pd 1222).